The chain runs to 725 residues: 1,4-alpha-glucan branching enzyme GlgB (725 aa).

D403 acts as the Nucleophile in catalysis. E456 functions as the Proton donor in the catalytic mechanism.

This sequence belongs to the glycosyl hydrolase 13 family. GlgB subfamily. Monomer.

The enzyme catalyses Transfers a segment of a (1-&gt;4)-alpha-D-glucan chain to a primary hydroxy group in a similar glucan chain.. The protein operates within glycan biosynthesis; glycogen biosynthesis. Functionally, catalyzes the formation of the alpha-1,6-glucosidic linkages in glycogen by scission of a 1,4-alpha-linked oligosaccharide from growing alpha-1,4-glucan chains and the subsequent attachment of the oligosaccharide to the alpha-1,6 position. The chain is 1,4-alpha-glucan branching enzyme GlgB from Pectobacterium atrosepticum (strain SCRI 1043 / ATCC BAA-672) (Erwinia carotovora subsp. atroseptica).